Reading from the N-terminus, the 59-residue chain is Large ribosomal subunit protein bL32 (59 aa).

Belongs to the bacterial ribosomal protein bL32 family.

In Desulfitobacterium hafniense (strain Y51), this protein is Large ribosomal subunit protein bL32.